A 264-amino-acid polypeptide reads, in one-letter code: Thymidylate synthase (264 aa).

DUMP is bound at residue R21. H51 is a (6R)-5,10-methylene-5,6,7,8-tetrahydrofolate binding site. 126-127 (RR) contributes to the dUMP binding site. The active-site Nucleophile is C146. Residues 166 to 169 (RSAD), N177, and 207 to 209 (HIY) contribute to the dUMP site. D169 lines the (6R)-5,10-methylene-5,6,7,8-tetrahydrofolate pocket. S263 provides a ligand contact to (6R)-5,10-methylene-5,6,7,8-tetrahydrofolate.

This sequence belongs to the thymidylate synthase family. Bacterial-type ThyA subfamily. In terms of assembly, homodimer.

Its subcellular location is the cytoplasm. The enzyme catalyses dUMP + (6R)-5,10-methylene-5,6,7,8-tetrahydrofolate = 7,8-dihydrofolate + dTMP. It functions in the pathway pyrimidine metabolism; dTTP biosynthesis. Catalyzes the reductive methylation of 2'-deoxyuridine-5'-monophosphate (dUMP) to 2'-deoxythymidine-5'-monophosphate (dTMP) while utilizing 5,10-methylenetetrahydrofolate (mTHF) as the methyl donor and reductant in the reaction, yielding dihydrofolate (DHF) as a by-product. This enzymatic reaction provides an intracellular de novo source of dTMP, an essential precursor for DNA biosynthesis. The polypeptide is Thymidylate synthase (Phocaeicola vulgatus (strain ATCC 8482 / DSM 1447 / JCM 5826 / CCUG 4940 / NBRC 14291 / NCTC 11154) (Bacteroides vulgatus)).